The sequence spans 205 residues: Holliday junction branch migration complex subunit RuvA (205 aa).

Positions 1–64 are domain I; the sequence is MIGKLKGLID…EDQIKLFGFR (64 aa). Residues 65–143 are domain II; that stretch reads TDHEREWFRL…ALSNVDPAVV (79 aa). Residues 144–154 are flexible linker; sequence QLSGALDDNRA. The domain III stretch occupies residues 154 to 205; sequence APRPVTDAISALVNLGYGQPQAAAAIAAAARAAGDDAATAQLIKLGLKELSK.

The protein belongs to the RuvA family. Homotetramer. Forms an RuvA(8)-RuvB(12)-Holliday junction (HJ) complex. HJ DNA is sandwiched between 2 RuvA tetramers; dsDNA enters through RuvA and exits via RuvB. An RuvB hexamer assembles on each DNA strand where it exits the tetramer. Each RuvB hexamer is contacted by two RuvA subunits (via domain III) on 2 adjacent RuvB subunits; this complex drives branch migration. In the full resolvosome a probable DNA-RuvA(4)-RuvB(12)-RuvC(2) complex forms which resolves the HJ.

Its subcellular location is the cytoplasm. In terms of biological role, the RuvA-RuvB-RuvC complex processes Holliday junction (HJ) DNA during genetic recombination and DNA repair, while the RuvA-RuvB complex plays an important role in the rescue of blocked DNA replication forks via replication fork reversal (RFR). RuvA specifically binds to HJ cruciform DNA, conferring on it an open structure. The RuvB hexamer acts as an ATP-dependent pump, pulling dsDNA into and through the RuvAB complex. HJ branch migration allows RuvC to scan DNA until it finds its consensus sequence, where it cleaves and resolves the cruciform DNA. The protein is Holliday junction branch migration complex subunit RuvA of Rhodopseudomonas palustris (strain BisB5).